We begin with the raw amino-acid sequence, 25 residues long: ATP synthase subunit alpha, mitochondrial (25 aa).

Belongs to the ATPase alpha/beta chains family. As to quaternary structure, F-type ATPases have 2 components, CF(1) - the catalytic core - and CF(0) - the membrane proton channel. CF(1) has five subunits: alpha(3), beta(3), gamma(1), delta(1), epsilon(1). CF(0) has three main subunits: a, b and c.

The protein resides in the mitochondrion. It localises to the mitochondrion inner membrane. Mitochondrial membrane ATP synthase (F(1)F(0) ATP synthase or Complex V) produces ATP from ADP in the presence of a proton gradient across the membrane which is generated by electron transport complexes of the respiratory chain. F-type ATPases consist of two structural domains, F(1) - containing the extramembraneous catalytic core, and F(0) - containing the membrane proton channel, linked together by a central stalk and a peripheral stalk. During catalysis, ATP synthesis in the catalytic domain of F(1) is coupled via a rotary mechanism of the central stalk subunits to proton translocation. Subunits alpha and beta form the catalytic core in F(1). Rotation of the central stalk against the surrounding alpha(3)beta(3) subunits leads to hydrolysis of ATP in three separate catalytic sites on the beta subunits. Subunit alpha does not bear the catalytic high-affinity ATP-binding sites. This is ATP synthase subunit alpha, mitochondrial (ATPA) from Spinacia oleracea (Spinach).